We begin with the raw amino-acid sequence, 197 residues long: Small ribosomal subunit protein uS4y (197 aa).

The 75-residue stretch at 109-183 (RRLQTIVFKS…VKRRNERAGA (75 aa)) folds into the S4 RNA-binding domain. The interval 161-197 (SLTSPFGGGRPGRVKRRNERAGAKKASGGDGDEDDEE) is disordered.

It belongs to the universal ribosomal protein uS4 family. Binds to the translation initiation factors TIF3E1.

This Arabidopsis thaliana (Mouse-ear cress) protein is Small ribosomal subunit protein uS4y (RPS9C).